We begin with the raw amino-acid sequence, 551 residues long: GMP synthase [glutamine-hydrolyzing] (551 aa).

The tract at residues 1–28 (MTSSPTAAARTEGEAAPTVPTQVESGTA) is disordered. Polar residues predominate over residues 19–28 (VPTQVESGTA). Positions 37–227 (MVAILDFGSQ…VYHICGCEPE (191 aa)) constitute a Glutamine amidotransferase type-1 domain. Residue cysteine 114 is the Nucleophile of the active site. Residues histidine 201 and glutamate 203 contribute to the active site. Residues 228 to 426 (WTTAAFIEEA…LGLPEEIVQR (199 aa)) form the GMPS ATP-PPase domain. 255-261 (SGGVDSS) contributes to the ATP binding site.

As to quaternary structure, homodimer.

The catalysed reaction is XMP + L-glutamine + ATP + H2O = GMP + L-glutamate + AMP + diphosphate + 2 H(+). It participates in purine metabolism; GMP biosynthesis; GMP from XMP (L-Gln route): step 1/1. Functionally, catalyzes the synthesis of GMP from XMP. The polypeptide is GMP synthase [glutamine-hydrolyzing] (Gloeobacter violaceus (strain ATCC 29082 / PCC 7421)).